We begin with the raw amino-acid sequence, 1358 residues long: Tenascin-R (1358 aa).

An N-terminal signal peptide occupies residues 1–31; that stretch reads MGADGETVVLKNMLIGINLILLGSMIKPSEC. Residues Thr36 and Thr37 are each glycosylated (O-linked (GalNAc...) threonine). Asn55 is a glycosylation site (N-linked (GlcNAc...) asparagine). The stretch at 127-157 forms a coiled coil; the sequence is CASSAQVLQELLSRIEMLEREVSVLRDQCNA. O-linked (Xyl...) (chondroitin sulfate) serine glycosylation is present at Ser176. Residues Asn180 and Asn198 are each glycosylated (N-linked (GlcNAc...) asparagine). EGF-like domains are found at residues 188 to 199, 219 to 230, and 250 to 261; these read CICNEGWFGKNC, CICDSEYSGDDC, and CVCEEPYTGEDC. O-linked (Xyl...) (chondroitin sulfate) serine glycosylation is present at Ser271. An N-linked (GlcNAc...) asparagine glycan is attached at Asn278. Residues 281-292 enclose the EGF-like 4 domain; it reads CLCEEGYVGEDC. 3 cysteine pairs are disulfide-bonded: Cys292/Cys301, Cys297/Cys312, and Cys314/Cys323. A glycan (O-linked (Xyl...) (chondroitin sulfate) serine) is linked at Ser302. The 12-residue stretch at 312–323 folds into the EGF-like 5 domain; the sequence is CVCEEGYQGPDC. Fibronectin type-III domains follow at residues 328–420, 421–505, 506–595, 596–687, 688–777, 778–865, 866–955, 956–1042, and 1043–1130; these read PPED…TPQG, LQFK…TVID, GPTQ…TEID, APKN…TELD, SPRD…FRPI, SHLH…TGID, PPKD…AMDN, PVDL…TLLD, and PPAN…TGGR. Residues Asn392, Asn470, and Asn581 are each glycosylated (N-linked (GlcNAc...) asparagine). The residue at position 724 (Ser724) is a Phosphoserine. 5 N-linked (GlcNAc...) asparagine glycosylation sites follow: Asn791, Asn874, Asn1036, Asn1046, and Asn1261. Residues 1129 to 1344 form the Fibrinogen C-terminal domain; the sequence is GRVFPHPQDC…FVEMKMRPYN (216 aa).

This sequence belongs to the tenascin family. Forms oligomers. Interacts with CNTN1, TNC, and FN1. Interacts with BCAN and ACAN in a calcium-dependent manner. Interacts with SCN2B, PTPRZ1, and CSPG3. In terms of processing, contains N-linked oligosaccharides, O-linked sialylated structures and O-linked chondroitin sulfate glycosaminoglycans. Contains N-linked oligosaccharides with a sulfated carbohydrate structure. O-glycosylated on Thr-36 or Thr-37 with a core 1 or possibly core 8 glycan. Brain specific.

The protein localises to the secreted. It is found in the extracellular space. The protein resides in the extracellular matrix. In terms of biological role, neural extracellular matrix (ECM) protein involved in interactions with different cells and matrix components. These interactions can influence cellular behavior by either evoking a stable adhesion and differentiation, or repulsion and inhibition of neurite growth. Binding to cell surface gangliosides inhibits RGD-dependent integrin-mediated cell adhesion and results in an inhibition of PTK2/FAK1 (FAK) phosphorylation and cell detachment. Binding to membrane surface sulfatides results in a oligodendrocyte adhesion and differentiation. Interaction with CNTN1 induces a repulsion of neurons and an inhibition of neurite outgrowth. Interacts with SCN2B may play a crucial role in clustering and regulation of activity of sodium channels at nodes of Ranvier. TNR-linked chondroitin sulfate glycosaminoglycans are involved in the interaction with FN1 and mediate inhibition of cell adhesion and neurite outgrowth. The highly regulated addition of sulfated carbohydrate structure may modulate the adhesive properties of TNR over the course of development and during synapse maintenance. The protein is Tenascin-R (TNR) of Homo sapiens (Human).